Here is a 103-residue protein sequence, read N- to C-terminus: Small ribosomal subunit protein bS20 (103 aa).

Residues 1-20 (MATAKPKKKNPRLASGRKRV) show a composition bias toward basic residues. Positions 1-31 (MATAKPKKKNPRLASGRKRVRQDTKLNAANT) are disordered.

Belongs to the bacterial ribosomal protein bS20 family.

Binds directly to 16S ribosomal RNA. This is Small ribosomal subunit protein bS20 from Polaromonas sp. (strain JS666 / ATCC BAA-500).